We begin with the raw amino-acid sequence, 220 residues long: Splicing factor U2AF 26 kDa subunit (220 aa).

N-acetylalanine is present on alanine 2. A C3H1-type 1 zinc finger spans residues 12 to 40 (EKDKVNCSFYFKIGVCRHGDRCSRLHNKP). In terms of domain architecture, RRM spans 65–147 (SHCHVSDVEV…QAVHGELSPV (83 aa)). A C3H1-type 2 zinc finger spans residues 149 to 176 (DFRESCCRQYEMGECTRGGFCNFMHLRP). The segment at 185-220 (LYGRGPRRRSPPRFHTGHHPRERNHRCSPDHWHGRF) is disordered. Residues 189–208 (GPRRRSPPRFHTGHHPRERN) show a composition bias toward basic residues. Residues 209–220 (HRCSPDHWHGRF) show a composition bias toward basic and acidic residues.

It belongs to the splicing factor SR family. As to quaternary structure, interacts with GFI1, U2AF2 and C1QBP. Isoform 2 is widely expressed. Isoform 3 is highly expressed in heart, brain and lung, lower expressed in thymus and much lower expressed in peripheral blood leukocytes.

It is found in the nucleus. The protein localises to the nucleus speckle. The protein resides in the cytoplasm. In terms of biological role, RNA-binding protein that function as a pre-mRNA splicing factor. Plays a critical role in both constitutive and enhancer-dependent splicing by mediating protein-protein interactions and protein-RNA interactions required for accurate 3'-splice site selection. Acts by enhancing the binding of U2AF2 to weak pyrimidine tracts. Also participates in the regulation of alternative pre-mRNA splicing. Activates exon 5 skipping of PTPRC during T-cell activation; an event reversed by GFI1. Binds to RNA at the AG dinucleotide at the 3'-splice site. Shows a preference for AGC or AGA. The protein is Splicing factor U2AF 26 kDa subunit (U2AF1L4) of Homo sapiens (Human).